The following is a 748-amino-acid chain: Antigen peptide transporter 1 (748 aa).

Topologically, residues 1–15 (MASSRCPAPRGCRCL) are cytoplasmic. Residues 16 to 36 (PGASLAWLGTVLLLLADWVLL) traverse the membrane as a helical segment. Residues 37 to 53 (RTALPRIFSLLVPTALP) lie on the Lumenal side of the membrane. The helical transmembrane segment at 54–76 (LLRVWAVGLSRWAVLWLGACGVL) threads the bilayer. Over 77 to 92 (RATVGSKSENAGAQGW) the chain is Cytoplasmic. The helical transmembrane segment at 93–113 (LAALKPLAAALGLALPGLALF) threads the bilayer. Residues 114–133 (RELISWGAPGSADSTRLLHW) are Lumenal-facing. Residues 134–154 (GSHPTAFVVSYAAALPAAALW) form a helical membrane-spanning segment. Over 155-186 (HKLGSLWVPGGQGGSGNPVRRLLGCLGSETRR) the chain is Cytoplasmic. A helical membrane pass occupies residues 187-207 (LSLFLVLVVLSSLGEMAIPFF). The ABC transmembrane type-1 domain maps to 187–470 (LSLFLVLVVL…LLSIYPRVQK (284 aa)). Over 208–227 (TGRLTDWILQDGSADTFTRN) the chain is Lumenal. The chain crosses the membrane as a helical span at residues 228-248 (LTLMSILTIASAVLEFVGDGI). The Cytoplasmic portion of the chain corresponds to 249 to 298 (YNNTMGHVHSHLQGEVFGAVLRQETEFFQQNQTGNIMSRVTEDTSTLSDS). The helical transmembrane segment at 299 to 319 (LSENLSLFLWYLVRGLCLLGI) threads the bilayer. At 320–328 (MLWGSVSLT) the chain is on the lumenal side. The helical transmembrane segment at 329–349 (MVTLITLPLLFLLPKKVGKWY) threads the bilayer. At 350–418 (QLLEVQVRES…AVNSWTTSIS (69 aa)) the chain is on the cytoplasmic side. The segment at 375 to 420 (PTVRSFANEEGEAQKFREKLQEIKTLNQKEAVAYAVNSWTTSISGM) is part of the peptide-binding site. A helical membrane pass occupies residues 419–439 (GMLLKVGILYIGGQLVTSGAV). The Lumenal portion of the chain corresponds to 440–443 (SSGN). The helical transmembrane segment at 444-464 (LVTFVLYQMQFTQAVEVLLSI) threads the bilayer. A part of the peptide-binding site region spans residues 453–487 (QFTQAVEVLLSIYPRVQKAVGSSEKIFEYLDRTPR). Residues 465-748 (YPRVQKAVGS…MVQAPADAPE (284 aa)) are Cytoplasmic-facing. The 240-residue stretch at 503-742 (VQFQDVSFAY…KGCYWAMVQA (240 aa)) folds into the ABC transporter domain. ATP contacts are provided by residues 538 to 546 (GPNGSGKST), 641 to 647 (SQLSGGQ), and glutamine 701. Serine 545 lines the Mg(2+) pocket.

The protein belongs to the ABC transporter superfamily. ABCB family. MHC peptide exporter (TC 3.A.1.209) subfamily. As to quaternary structure, heterodimer of TAP1 and TAP2 (TAP1-TAP2). A component of the peptide loading complex (PLC), interacts via TAPBP with MHCI heterodimer; this interaction mediates peptide-MHCI assembly. Recruits TAPBP in a 1:1 stoichiometry. Interacts with classical MHCI such as HLA-A*02-B2M; this interaction is obligatory for the loading of peptide epitopes. Interacts with non-classical MHCI molecules including HLA-E-B2M and HLA-F-B2M as well as PLC component CALR before the peptide loading. Interacts with PSMB5 and PSMB8. (Microbial infection) Interacts with Epstein-Barr virus BNLF2a. In terms of assembly, (Microbial infection) Interacts with herpes simplex virus US12/ICP47. As to quaternary structure, (Microbial infection) Interacts with adenovirus E3-19K glycoprotein, which binds TAP1-TAP2 and acts as a TAPBP inhibitor, preventing TAP1-TAP2 association with MHCI. Mg(2+) is required as a cofactor. As to expression, highly expressed in professional APCs monocytes and dendritic cells as well as in lymphocyte subsets T cells, B cells and NK cells.

The protein resides in the endoplasmic reticulum membrane. It catalyses the reaction a peptide antigen(in) + ATP + H2O = a peptide antigen(out) + ADP + phosphate + H(+). With respect to regulation, inhibited at high ER lumenal peptide concentrations. (Microbial infection) Inhibited by herpes simplex virus US12/ICP47 protein, which blocks the peptide-binding site of TAP1-TAP2. Its activity is regulated as follows. (Microbial infection) Inhibited by human cytomegalovirus US6 glycoprotein, which binds to the lumenal side of TAP1-TAP2 complex and inhibits peptide translocation by specifically blocking ATP-binding and preventing TAP1-TAP2 conformational rearrangement induced by peptide binding. Its function is as follows. ABC transporter associated with antigen processing. In complex with TAP2 mediates unidirectional translocation of peptide antigens from cytosol to endoplasmic reticulum (ER) for loading onto MHC class I (MHCI) molecules. Uses the chemical energy of ATP to export peptides against the concentration gradient. During the transport cycle alternates between 'inward-facing' state with peptide binding site facing the cytosol to 'outward-facing' state with peptide binding site facing the ER lumen. Peptide antigen binding to ATP-loaded TAP1-TAP2 induces a switch to hydrolysis-competent 'outward-facing' conformation ready for peptide loading onto nascent MHCI molecules. Subsequently ATP hydrolysis resets the transporter to the 'inward facing' state for a new cycle. Typically transports intracellular peptide antigens of 8 to 13 amino acids that arise from cytosolic proteolysis via IFNG-induced immunoproteasome. Binds peptides with free N- and C-termini, the first three and the C-terminal residues being critical. Preferentially selects peptides having a highly hydrophobic residue at position 3 and hydrophobic or charged residues at the C-terminal anchor. Proline at position 2 has the most destabilizing effect. As a component of the peptide loading complex (PLC), acts as a molecular scaffold essential for peptide-MHCI assembly and antigen presentation. This chain is Antigen peptide transporter 1, found in Homo sapiens (Human).